We begin with the raw amino-acid sequence, 776 residues long: Protein SEY1 (776 aa).

The Cytoplasmic portion of the chain corresponds to methionine 1–histidine 681. Residues glycine 34 to tyrosine 263 form the GB1/RHD3-type G domain. Glycine 44–serine 51 contributes to the GTP binding site. Residues isoleucine 682 to isoleucine 702 traverse the membrane as a helical segment. Topologically, residues arginine 703–proline 705 are lumenal. Residues leucine 706–leucine 726 form a helical membrane-spanning segment. Residues tryptophan 727 to lysine 776 are Cytoplasmic-facing.

It belongs to the TRAFAC class dynamin-like GTPase superfamily. GB1/RHD3 GTPase family. RHD3 subfamily. In terms of assembly, interacts with RTN1 and YOP1; GTP binding is not required for these interactions.

Its subcellular location is the endoplasmic reticulum membrane. In terms of biological role, cooperates with the reticulon proteins RTN1 and RTN2 and the tubule-shaping DP1 family protein YOP1 to generate and maintain the structure of the tubular endoplasmic reticulum network. Has GTPase activity, which is required for its function in ER organization. This chain is Protein SEY1, found in Saccharomyces cerevisiae (strain RM11-1a) (Baker's yeast).